The following is a 355-amino-acid chain: Uroporphyrinogen decarboxylase (355 aa).

Substrate contacts are provided by residues 27–31, Asp77, Tyr154, Thr209, and His328; that span reads RQAGR.

The protein belongs to the uroporphyrinogen decarboxylase family. Homodimer.

It is found in the cytoplasm. It carries out the reaction uroporphyrinogen III + 4 H(+) = coproporphyrinogen III + 4 CO2. It participates in porphyrin-containing compound metabolism; protoporphyrin-IX biosynthesis; coproporphyrinogen-III from 5-aminolevulinate: step 4/4. Catalyzes the decarboxylation of four acetate groups of uroporphyrinogen-III to yield coproporphyrinogen-III. This is Uroporphyrinogen decarboxylase from Vibrio campbellii (strain ATCC BAA-1116).